The chain runs to 179 residues: Large ribosomal subunit protein uL5 (179 aa).

Belongs to the universal ribosomal protein uL5 family. As to quaternary structure, part of the 50S ribosomal subunit; part of the 5S rRNA/L5/L18/L25 subcomplex. Contacts the 5S rRNA and the P site tRNA. Forms a bridge to the 30S subunit in the 70S ribosome.

Functionally, this is one of the proteins that bind and probably mediate the attachment of the 5S RNA into the large ribosomal subunit, where it forms part of the central protuberance. In the 70S ribosome it contacts protein S13 of the 30S subunit (bridge B1b), connecting the 2 subunits; this bridge is implicated in subunit movement. Contacts the P site tRNA; the 5S rRNA and some of its associated proteins might help stabilize positioning of ribosome-bound tRNAs. This chain is Large ribosomal subunit protein uL5, found in Parasynechococcus marenigrum (strain WH8102).